A 331-amino-acid polypeptide reads, in one-letter code: Cysteine and histidine-rich domain-containing protein 1 (331 aa).

Residues C5, C10, C24, H27, C42, C43, C59, H64, C157, C162, C176, H179, C194, C195, C211, and H216 each contribute to the Zn(2+) site. 2 CHORD domains span residues 5-64 (CYNR…KGLH) and 157-216 (CKNA…TGTH). In terms of domain architecture, CS spans 227 to 316 (VVPCRHDWHQ…AEPLLWASLE (90 aa)).

Its function is as follows. Regulates centrosome duplication. The polypeptide is Cysteine and histidine-rich domain-containing protein 1 (CHORDC1) (Gallus gallus (Chicken)).